The chain runs to 259 residues: Protein unc-50 homolog (259 aa).

At methionine 1 the chain carries N-acetylmethionine. Topologically, residues 1-82 (MLPSTSVNSL…TKDQWARDDP (82 aa)) are cytoplasmic. The residue at position 6 (serine 6) is a Phosphoserine. A helical membrane pass occupies residues 83–103 (AFLVLLSIWLCVSTIGFGFVL). Residues 104–115 (DMGFFETIKLLL) lie on the Lumenal side of the membrane. A helical membrane pass occupies residues 116–136 (WVVLIDCVGVGLLIATLMWFI). Over 137 to 163 (SNKYLVKRQSRDYDVEWGYAFDVHLNA) the chain is Cytoplasmic. Residues 164–184 (FYPLLVILHFIQLFFINHVIL) form a helical membrane-spanning segment. The Lumenal portion of the chain corresponds to 185-187 (TDT). Residues 188–208 (FIGYLVGNTLWLVAVGYYIYV) form a helical membrane-spanning segment. Over 209 to 222 (TFLGYSALPFLKNT) the chain is Cytoplasmic. The chain crosses the membrane as a helical span at residues 223–243 (VILLYPFAPLILLYGLSLALG). The Lumenal portion of the chain corresponds to 244–259 (WNFTHTLCSFYKYRVK).

The protein belongs to the unc-50 family. Present in periodontal ligament fibroblasts (at protein level).

The protein resides in the nucleus inner membrane. It is found in the golgi apparatus membrane. Involved in the cell surface expression of neuronal nicotinic receptors. Binds RNA. This chain is Protein unc-50 homolog (UNC50), found in Homo sapiens (Human).